Here is a 785-residue protein sequence, read N- to C-terminus: DNA ligase (785 aa).

NAD(+) contacts are provided by residues 32–36, 81–82, and glutamate 121; these read DAEYD and SL. The N6-AMP-lysine intermediate role is filled by lysine 123. Positions 144, 181, 294, and 318 each coordinate NAD(+). Residues cysteine 412, cysteine 415, cysteine 442, and cysteine 448 each coordinate Zn(2+). In terms of domain architecture, BRCT spans 702 to 785; the sequence is VEGLPEAGHT…AFLAKHNIPV (84 aa).

This sequence belongs to the NAD-dependent DNA ligase family. LigA subfamily. Requires Mg(2+) as cofactor. Mn(2+) serves as cofactor.

The catalysed reaction is NAD(+) + (deoxyribonucleotide)n-3'-hydroxyl + 5'-phospho-(deoxyribonucleotide)m = (deoxyribonucleotide)n+m + AMP + beta-nicotinamide D-nucleotide.. DNA ligase that catalyzes the formation of phosphodiester linkages between 5'-phosphoryl and 3'-hydroxyl groups in double-stranded DNA using NAD as a coenzyme and as the energy source for the reaction. It is essential for DNA replication and repair of damaged DNA. The protein is DNA ligase of Pseudomonas fluorescens (strain SBW25).